A 336-amino-acid chain; its full sequence is MHSSKCPDLANIGRRRVLAGIALAMTTSSTRAQRLDAFPSRPITWVVPFPPGGAVDAIARIISRKMSESIGQQVVVDNRAGSGGIIGSDLVAKAPSDGHTILINSTGLVVDRFFYPRVPYQSDRDFVPVVLAATLPSVLVVPADSRFRDITQLLKAARENPGKLSFASAGLGTSIHLASALLAARANVELLHVPYRGSSPAVSDLVAGRVDMMIDSVTSQRQNILAKRVRALGVTSLDRHPQLPEVPTIAEAAGLPGFEVLTWCGVFAPKGTPRSVVERLNAEINKAIAAPDVVEALKQLGIKTAGGAPEVLADLFKSETERWQKLIVEYRLNANQ.

The N-terminal stretch at 1 to 32 (MHSSKCPDLANIGRRRVLAGIALAMTTSSTRA) is a signal peptide.

This sequence belongs to the UPF0065 (bug) family.

It localises to the periplasm. The chain is UPF0065 protein in tcbD-tcbE intergenic region from Pseudomonas sp. (strain P51).